Here is a 619-residue protein sequence, read N- to C-terminus: Translation initiation factor IF-2 (619 aa).

The region spanning Pro120–Tyr289 is the tr-type G domain. The tract at residues Gly129–Thr136 is G1. Gly129 to Thr136 is a binding site for GTP. The interval Gly154–Lys158 is G2. A G3 region spans residues Asp176 to Gly179. GTP contacts are provided by residues Asp176 to His180 and Asn230 to Asp233. The segment at Asn230–Asp233 is G4. Residues Ser266–Leu268 form a G5 region.

This sequence belongs to the TRAFAC class translation factor GTPase superfamily. Classic translation factor GTPase family. IF-2 subfamily.

Its subcellular location is the cytoplasm. One of the essential components for the initiation of protein synthesis. Protects formylmethionyl-tRNA from spontaneous hydrolysis and promotes its binding to the 30S ribosomal subunits. Also involved in the hydrolysis of GTP during the formation of the 70S ribosomal complex. The sequence is that of Translation initiation factor IF-2 (infB) from Mycoplasma genitalium (strain ATCC 33530 / DSM 19775 / NCTC 10195 / G37) (Mycoplasmoides genitalium).